Reading from the N-terminus, the 383-residue chain is Inactive serine protease 54 (383 aa).

The signal sequence occupies residues 1 to 20; that stretch reads MAEMRGMLLMLLYISHSSSA. Positions 21-258 constitute a Peptidase S1 domain; that stretch reads ICGIQKATIA…YSDWITAKTR (238 aa). N-linked (GlcNAc...) asparagine glycosylation occurs at N113. 3 disulfides stabilise this stretch: C154/C216, C185/C195, and C206/C237. The segment at 305–334 is disordered; it reads QGQRMSTKSNKQKDAGQNFRVNRQPETSGP. The span at 323–334 shows a compositional bias: polar residues; that stretch reads FRVNRQPETSGP.

The protein belongs to the peptidase S1 family. Plasma kallikrein subfamily.

Its subcellular location is the secreted. The sequence is that of Inactive serine protease 54 (Prss54) from Mus musculus (Mouse).